A 601-amino-acid chain; its full sequence is Probable inactive receptor kinase At1g27190 (601 aa).

Residues methionine 1–alanine 24 form the signal peptide. Asparagine 52 is a glycosylation site (N-linked (GlcNAc...) asparagine). 5 LRR repeats span residues arginine 73–cysteine 95, serine 97–tryptophan 119, tyrosine 122–cysteine 144, phenylalanine 146–aspartate 169, and arginine 170–phenylalanine 192. Residues isoleucine 221–phenylalanine 241 traverse the membrane as a helical segment. Position 298 is a phosphothreonine (threonine 298). A Protein kinase domain is found at phenylalanine 301–serine 586. Residues aspartate 307 to serine 315 and lysine 329 contribute to the ATP site. Phosphoserine is present on serine 383. Residue threonine 399 is modified to Phosphothreonine. Phosphotyrosine is present on tyrosine 476. Phosphoserine is present on serine 478. Residue threonine 479 is modified to Phosphothreonine. Serine 483 and serine 586 each carry phosphoserine.

Belongs to the protein kinase superfamily. Ser/Thr protein kinase family.

Its subcellular location is the membrane. The polypeptide is Probable inactive receptor kinase At1g27190 (Arabidopsis thaliana (Mouse-ear cress)).